The primary structure comprises 347 residues: MPSMTKRKFKEELLQALAPEIYGPSDNLTKRDIKHVKKREKKEEEVAAASADGVEFVRSFAPRRRVQWKGRQVKRILRPGTTVVFSPGERTIMRPLKREYDEVYADDDILEQAAQQTGEFAYGKKGRYGDKIAIPLDEGNPTPSLKAVTLQQVLPVLGPSEEKRGIKREAMDELQPTMQLMVPKRQKLEDVLEHMKVDPSVQPDVKVRPIKKVAPGLGVQTVDIQIPVQTALGETMEIQTSPIKTTVNASVQTDPWYPPVLSTKKKRHYRQTSSLLPDYVLHPSIVPTPGYRGTTFQRRATAPSRRRGPSRRRRRRKATLAPAAVRRVVQRGRTLILPSVRYHPSIL.

Residues Gly290–Leu320 form a disordered region. The span at Ser304–Ala318 shows a compositional bias: basic residues.

This sequence belongs to the adenoviridae core-capsid bridging protein family. In terms of assembly, monomer. Homodimer. Exists in equilibrium between monomers and dimers in solution. Interacts with the histone-like nucleoprotein; this interactions bridge the virus core to the capsid. Interacts with core protein X; this interactions bridge the virus core to the capsid. Interacts with the endosome lysis protein VI; this interactions bridge the virus core to the capsid. Interacts with the peripentonal hexons. Interacts with host NPM1; this interaction might play a role in virus assembly.

Its subcellular location is the virion. The protein localises to the host nucleus. It localises to the host nucleolus. Associates loosely with the viral DNA to form an outer shell around the nucleoprotein-DNA complex and links it with the capsid by binding the endosome lysis protein. Dissociates from the viral genome during entry. Might be involved in nuclear capsid assembly of the viral particles through its association with NPM1/nucleophosmin. The sequence is that of Core-capsid bridging protein from Homo sapiens (Human).